We begin with the raw amino-acid sequence, 449 residues long: tRNA-2-methylthio-N(6)-dimethylallyladenosine synthase (449 aa).

One can recognise an MTTase N-terminal domain in the interval 4 to 119 (RTFHIETFGC…APQALDRLVE (116 aa)). Residues cysteine 13, cysteine 48, cysteine 82, cysteine 158, cysteine 162, and cysteine 165 each contribute to the [4Fe-4S] cluster site. Residues 144 to 375 (GAVPASVFVN…QTLQNRLTER (232 aa)) enclose the Radical SAM core domain. Residues 378 to 446 (QDMVGRKVEV…KHSLLAEQAG (69 aa)) form the TRAM domain.

Belongs to the methylthiotransferase family. MiaB subfamily. In terms of assembly, monomer. Requires [4Fe-4S] cluster as cofactor.

The protein localises to the cytoplasm. The enzyme catalyses N(6)-dimethylallyladenosine(37) in tRNA + (sulfur carrier)-SH + AH2 + 2 S-adenosyl-L-methionine = 2-methylsulfanyl-N(6)-dimethylallyladenosine(37) in tRNA + (sulfur carrier)-H + 5'-deoxyadenosine + L-methionine + A + S-adenosyl-L-homocysteine + 2 H(+). Its function is as follows. Catalyzes the methylthiolation of N6-(dimethylallyl)adenosine (i(6)A), leading to the formation of 2-methylthio-N6-(dimethylallyl)adenosine (ms(2)i(6)A) at position 37 in tRNAs that read codons beginning with uridine. The sequence is that of tRNA-2-methylthio-N(6)-dimethylallyladenosine synthase from Nitratidesulfovibrio vulgaris (strain ATCC 29579 / DSM 644 / CCUG 34227 / NCIMB 8303 / VKM B-1760 / Hildenborough) (Desulfovibrio vulgaris).